We begin with the raw amino-acid sequence, 177 residues long: 2-C-methyl-D-erythritol 2,4-cyclodiphosphate synthase (177 aa).

The a divalent metal cation site is built by Asp23 and His25. 4-CDP-2-C-methyl-D-erythritol 2-phosphate contacts are provided by residues 23–25 (DVH) and 49–50 (HS). His57 is a binding site for a divalent metal cation. 4-CDP-2-C-methyl-D-erythritol 2-phosphate-binding positions include 71–73 (DIG), 76–80 (FSDTD), 115–121 (AQAPRMA), and Arg157.

The protein belongs to the IspF family. In terms of assembly, homotrimer. A divalent metal cation serves as cofactor.

The catalysed reaction is 4-CDP-2-C-methyl-D-erythritol 2-phosphate = 2-C-methyl-D-erythritol 2,4-cyclic diphosphate + CMP. The protein operates within isoprenoid biosynthesis; isopentenyl diphosphate biosynthesis via DXP pathway; isopentenyl diphosphate from 1-deoxy-D-xylulose 5-phosphate: step 4/6. Its function is as follows. Involved in the biosynthesis of isopentenyl diphosphate (IPP) and dimethylallyl diphosphate (DMAPP), two major building blocks of isoprenoid compounds. Catalyzes the conversion of 4-diphosphocytidyl-2-C-methyl-D-erythritol 2-phosphate (CDP-ME2P) to 2-C-methyl-D-erythritol 2,4-cyclodiphosphate (ME-CPP) with a corresponding release of cytidine 5-monophosphate (CMP). The chain is 2-C-methyl-D-erythritol 2,4-cyclodiphosphate synthase from Nitrosospira multiformis (strain ATCC 25196 / NCIMB 11849 / C 71).